The sequence spans 476 residues: Serine/threonine-protein kinase WAG1 (476 aa).

The Protein kinase domain occupies 93 to 400 (FKLVRHLGTG…AQDIKRHEFF (308 aa)). Residues 99–107 (LGTGNLGRV) and K124 each bind ATP. Catalysis depends on D219, which acts as the Proton acceptor.

This sequence belongs to the protein kinase superfamily. Ser/Thr protein kinase family. As to expression, expressed in root tips and lateral root primordia.

Its subcellular location is the cytoplasm. The protein resides in the cytosol. It carries out the reaction L-seryl-[protein] + ATP = O-phospho-L-seryl-[protein] + ADP + H(+). The catalysed reaction is L-threonyl-[protein] + ATP = O-phospho-L-threonyl-[protein] + ADP + H(+). Serine/threonine-protein kinase involved in the regulation of auxin signaling. Acts as a positive regulator of cellular auxin efflux and regulates organ development by enhancing PIN-mediated polar auxin transport. Phosphorylates conserved serine residues in the PIN auxin efflux carriers. Phosphorylation of PIN proteins is required and sufficient for apical-basal PIN polarity that enables directional intercellular auxin fluxes, which mediate differential growth, tissue patterning and organogenesis. Acts as a suppressor of root waving. The sequence is that of Serine/threonine-protein kinase WAG1 (WAG1) from Arabidopsis thaliana (Mouse-ear cress).